Consider the following 604-residue polypeptide: Sulfite reductase [NADPH] flavoprotein alpha-component (604 aa).

The Flavodoxin-like domain occupies 66–204 (VTVLSASQTG…AADGWTDNIA (139 aa)). FMN contacts are provided by residues 72–77 (SQTGNA), 119–122 (STQG), and 155–164 (LGDSSYPNFC). The FAD-binding FR-type domain occupies 239 to 453 (ADPFPAALLA…VERNDGFRLP (215 aa)). FAD contacts are provided by residues T327, Q361, 391–394 (RLYS), 409–411 (TVG), and 424–427 (GGAS). Residues 524–525 (SR), 530–534 (KIYVQ), and D566 contribute to the NADP(+) site. Position 604 (Y604) interacts with FAD.

Belongs to the NADPH-dependent sulphite reductase flavoprotein subunit CysJ family. It in the N-terminal section; belongs to the flavodoxin family. The protein in the C-terminal section; belongs to the flavoprotein pyridine nucleotide cytochrome reductase family. Alpha(8)-beta(8). The alpha component is a flavoprotein, the beta component is a hemoprotein. FAD is required as a cofactor. Requires FMN as cofactor.

It carries out the reaction hydrogen sulfide + 3 NADP(+) + 3 H2O = sulfite + 3 NADPH + 4 H(+). It participates in sulfur metabolism; hydrogen sulfide biosynthesis; hydrogen sulfide from sulfite (NADPH route): step 1/1. Its function is as follows. Component of the sulfite reductase complex that catalyzes the 6-electron reduction of sulfite to sulfide. This is one of several activities required for the biosynthesis of L-cysteine from sulfate. The flavoprotein component catalyzes the electron flow from NADPH -&gt; FAD -&gt; FMN to the hemoprotein component. The sequence is that of Sulfite reductase [NADPH] flavoprotein alpha-component from Neisseria meningitidis serogroup A / serotype 4A (strain DSM 15465 / Z2491).